We begin with the raw amino-acid sequence, 773 residues long: Transducin-like enhancer protein 4 (773 aa).

Disordered regions lie at residues 1–22, 140–162, and 182–360; these read MIRD…QPAQ, HGHG…AIPP, and LPIK…ASSL. A q domain region spans residues 1 to 136; the sequence is MIRDLSKMYP…AIIGQQLQAQ (136 aa). Positions 137-204 are GP domain; that stretch reads HLSHGHGLPV…HQRDRDSIKS (68 aa). Basic and acidic residues predominate over residues 183–202; sequence PIKDEKKHHDNDHQRDRDSI. Positions 203–212 are enriched in low complexity; sequence KSSSVSPSAS. The ccN domain stretch occupies residues 205–274; it reads SSVSPSASFR…SPRGSPAHSP (70 aa). 3 positions are modified to phosphoserine: Ser208, Ser212, and Ser222. Residues 215-252 show a composition bias toward basic and acidic residues; the sequence is GAEKHRNSADYSSESKKQKTEEKEIAARYDSDGEKSDD. N6-acetyllysine is present on Lys237. 4 positions are modified to phosphoserine: Ser245, Ser250, Ser269, and Ser273. The span at 273-289 shows a compositional bias: basic and acidic residues; that stretch reads SPRENGLDKTRLLKKDA. Residues 275–452 form an SP domain region; the sequence is RENGLDKTRL…PGGKPAYSFH (178 aa). At Lys281 the chain carries N6-acetyllysine. Over residues 290-305 the composition is skewed to low complexity; the sequence is PISPASIASSSSTPSS. Position 292 is a phosphoserine (Ser292). Positions 317 to 328 are enriched in polar residues; it reads TTPVSKSNTPTP. Thr318 is subject to Phosphothreonine. A phosphoserine mark is found at Ser321 and Ser323. Phosphothreonine is present on residues Thr325, Thr327, Thr334, and Thr340. Ser419 bears the Phosphoserine mark. WD repeat units follow at residues 485-523, 531-570, 575-614, 617-656, 658-697, 699-738, and 740-773; these read NHGE…NKSP, NRDN…PRIK, SSAP…LVRQ, GHTD…QLQQ, DFTS…KYQL, LHES…SIFQ, and KESS…EVIY.

It belongs to the WD repeat Groucho/TLE family. In terms of assembly, homooligomer and heterooligomer with other family members. Interacts with PAX5. Interacts with LEF1, TCF7, TCF7L1 and TCF7L2. Interacts with ZNF703; TLE4 may mediate ZNF703 transcriptional repression. Interacts with SIX3 and SIX6. Interacts with PAX2. Interacts with TLE1. Phosphorylated. PAX5 binding increases phosphorylation. Post-translationally, ubiquitinated by XIAP/BIRC4. In terms of tissue distribution, in all tissues examined, mostly in brain, and muscle.

The protein resides in the nucleus. In terms of biological role, transcriptional corepressor that binds to a number of transcription factors. Inhibits the transcriptional activation mediated by PAX5, and by CTNNB1 and TCF family members in Wnt signaling. The effects of full-length TLE family members may be modulated by association with dominant-negative AES. Essential for the transcriptional repressor activity of SIX3 during retina and lens development and for SIX3 transcriptional auto-repression. Involved in transcriptional repression of GNRHR and enhances MSX1-mediated transcriptional repression of CGA/alpha-GSU. The polypeptide is Transducin-like enhancer protein 4 (TLE4) (Homo sapiens (Human)).